Reading from the N-terminus, the 235-residue chain is Isoprenyl transferase (235 aa).

Asp21 is an active-site residue. Asp21 serves as a coordination point for Mg(2+). Substrate is bound by residues 22–25 (GNAR), Trp26, Lys34, His38, and 66–68 (SSE). The active-site Proton acceptor is the Asn69. Substrate contacts are provided by residues Trp70, Arg72, Arg183, and 189 to 191 (RIS). Mg(2+) is bound at residue Glu202.

The protein belongs to the UPP synthase family. As to quaternary structure, homodimer. The cofactor is Mg(2+).

Its function is as follows. Catalyzes the condensation of isopentenyl diphosphate (IPP) with allylic pyrophosphates generating different type of terpenoids. The protein is Isoprenyl transferase of Rickettsia conorii (strain ATCC VR-613 / Malish 7).